The chain runs to 416 residues: Serine hydroxymethyltransferase (416 aa).

(6S)-5,6,7,8-tetrahydrofolate is bound by residues Leu-121 and 125-127; that span reads GHL. N6-(pyridoxal phosphate)lysine is present on Lys-229.

The protein belongs to the SHMT family. Homodimer. The cofactor is pyridoxal 5'-phosphate.

It localises to the cytoplasm. The catalysed reaction is (6R)-5,10-methylene-5,6,7,8-tetrahydrofolate + glycine + H2O = (6S)-5,6,7,8-tetrahydrofolate + L-serine. It participates in one-carbon metabolism; tetrahydrofolate interconversion. The protein operates within amino-acid biosynthesis; glycine biosynthesis; glycine from L-serine: step 1/1. Its function is as follows. Catalyzes the reversible interconversion of serine and glycine with tetrahydrofolate (THF) serving as the one-carbon carrier. This reaction serves as the major source of one-carbon groups required for the biosynthesis of purines, thymidylate, methionine, and other important biomolecules. Also exhibits THF-independent aldolase activity toward beta-hydroxyamino acids, producing glycine and aldehydes, via a retro-aldol mechanism. The chain is Serine hydroxymethyltransferase from Dechloromonas aromatica (strain RCB).